A 258-amino-acid chain; its full sequence is MKITKIEKKKRLYLIELDNDDSLYVTEDTIVRFMLSKDKVLDNDQLEDMKHFAQLSYGKNLALYFLSFQQRSNKQVADYLRKHEIEEHIIPDIITQLQEEQWIDDTKLADTYIRQNQLNGDKGPQVLKQKLLQKGIASHDIDPILSQTDFSQLAQKVSQKLFDKYQEKLPPKALKDKITQALLTKGFSYDLAKRSLNHLNFDQDNQEIEDLLDKELDKQYRKLSRKYDGYTLKQKLYQALYRKGYNSDDINCKLRNYL.

The protein belongs to the RecX family.

It is found in the cytoplasm. Its function is as follows. Modulates RecA activity. The sequence is that of Regulatory protein RecX from Streptococcus pyogenes serotype M5 (strain Manfredo).